Reading from the N-terminus, the 436-residue chain is Serine--tRNA ligase (436 aa).

242-244 is a binding site for L-serine; the sequence is TAE. 273 to 275 serves as a coordination point for ATP; the sequence is RSE. L-serine is bound at residue Glu296. ATP is bound at residue 360–363; sequence EISS. An L-serine-binding site is contributed by Ser395.

The protein belongs to the class-II aminoacyl-tRNA synthetase family. Type-1 seryl-tRNA synthetase subfamily. As to quaternary structure, homodimer. The tRNA molecule binds across the dimer.

The protein localises to the cytoplasm. It carries out the reaction tRNA(Ser) + L-serine + ATP = L-seryl-tRNA(Ser) + AMP + diphosphate + H(+). It catalyses the reaction tRNA(Sec) + L-serine + ATP = L-seryl-tRNA(Sec) + AMP + diphosphate + H(+). Its pathway is aminoacyl-tRNA biosynthesis; selenocysteinyl-tRNA(Sec) biosynthesis; L-seryl-tRNA(Sec) from L-serine and tRNA(Sec): step 1/1. Its function is as follows. Catalyzes the attachment of serine to tRNA(Ser). Is also able to aminoacylate tRNA(Sec) with serine, to form the misacylated tRNA L-seryl-tRNA(Sec), which will be further converted into selenocysteinyl-tRNA(Sec). The sequence is that of Serine--tRNA ligase from Polynucleobacter necessarius subsp. necessarius (strain STIR1).